A 206-amino-acid chain; its full sequence is Octanoyltransferase (206 aa).

The region spanning 30-206 (PETNDEIWLV…EFVTLLNNSI (177 aa)) is the BPL/LPL catalytic domain. Substrate-binding positions include 69 to 76 (RGGQVTYH), 137 to 139 (SLG), and 150 to 152 (GIA). Cysteine 168 (acyl-thioester intermediate) is an active-site residue.

It belongs to the LipB family.

The protein resides in the cytoplasm. The enzyme catalyses octanoyl-[ACP] + L-lysyl-[protein] = N(6)-octanoyl-L-lysyl-[protein] + holo-[ACP] + H(+). Its pathway is protein modification; protein lipoylation via endogenous pathway; protein N(6)-(lipoyl)lysine from octanoyl-[acyl-carrier-protein]: step 1/2. Catalyzes the transfer of endogenously produced octanoic acid from octanoyl-acyl-carrier-protein onto the lipoyl domains of lipoate-dependent enzymes. Lipoyl-ACP can also act as a substrate although octanoyl-ACP is likely to be the physiological substrate. The polypeptide is Octanoyltransferase (Francisella tularensis subsp. mediasiatica (strain FSC147)).